Reading from the N-terminus, the 397-residue chain is Argininosuccinate synthase (397 aa).

Position 8–16 (8–16 (AYSGGLDTS)) interacts with ATP. Tyr87 contributes to the L-citrulline binding site. Gly117 is an ATP binding site. Positions 119, 123, and 124 each coordinate L-aspartate. Residue Asn123 coordinates L-citrulline. The L-citrulline site is built by Arg127, Ser175, Glu259, and Tyr271.

This sequence belongs to the argininosuccinate synthase family. Type 1 subfamily. Homotetramer.

Its subcellular location is the cytoplasm. The catalysed reaction is L-citrulline + L-aspartate + ATP = 2-(N(omega)-L-arginino)succinate + AMP + diphosphate + H(+). It functions in the pathway amino-acid biosynthesis; L-arginine biosynthesis; L-arginine from L-ornithine and carbamoyl phosphate: step 2/3. The polypeptide is Argininosuccinate synthase (Streptomyces clavuligerus).